The following is an 81-amino-acid chain: Sulfur carrier protein TusA (81 aa).

Cys-19 serves as the catalytic Cysteine persulfide intermediate.

The protein belongs to the sulfur carrier protein TusA family.

Its subcellular location is the cytoplasm. Sulfur carrier protein which probably makes part of a sulfur-relay system. This Shewanella oneidensis (strain ATCC 700550 / JCM 31522 / CIP 106686 / LMG 19005 / NCIMB 14063 / MR-1) protein is Sulfur carrier protein TusA.